Reading from the N-terminus, the 297-residue chain is tRNA-cytidine(32) 2-sulfurtransferase (297 aa).

Positions 45-50 match the PP-loop motif motif; it reads SGGKDS. Cysteine 120, cysteine 123, and cysteine 211 together coordinate [4Fe-4S] cluster.

Belongs to the TtcA family. As to quaternary structure, homodimer. Mg(2+) is required as a cofactor. [4Fe-4S] cluster serves as cofactor.

It localises to the cytoplasm. The catalysed reaction is cytidine(32) in tRNA + S-sulfanyl-L-cysteinyl-[cysteine desulfurase] + AH2 + ATP = 2-thiocytidine(32) in tRNA + L-cysteinyl-[cysteine desulfurase] + A + AMP + diphosphate + H(+). It participates in tRNA modification. Functionally, catalyzes the ATP-dependent 2-thiolation of cytidine in position 32 of tRNA, to form 2-thiocytidine (s(2)C32). The sulfur atoms are provided by the cysteine/cysteine desulfurase (IscS) system. This Vibrio parahaemolyticus serotype O3:K6 (strain RIMD 2210633) protein is tRNA-cytidine(32) 2-sulfurtransferase.